The chain runs to 203 residues: A-type ATP synthase subunit E (203 aa).

Belongs to the V-ATPase E subunit family. In terms of assembly, has multiple subunits with at least A(3), B(3), C, D, E, F, H, I and proteolipid K(x).

The protein localises to the cell membrane. In terms of biological role, component of the A-type ATP synthase that produces ATP from ADP in the presence of a proton gradient across the membrane. This is A-type ATP synthase subunit E from Desulfurococcus sp. (strain SY).